The chain runs to 116 residues: PTS system galactose-specific EIIA component (116 aa).

A PTS EIIA type-3 domain is found at 11 to 109 (DDYMGVVMGI…AVEVVGQERR (99 aa)). His85 (tele-phosphohistidine intermediate) is an active-site residue. Position 85 is a phosphohistidine; by HPr (His85). Residue Asp88 participates in Mg(2+) binding.

As to quaternary structure, homotrimer. Requires Mg(2+) as cofactor.

The phosphoenolpyruvate-dependent sugar phosphotransferase system (sugar PTS), a major carbohydrate active transport system, catalyzes the phosphorylation of incoming sugar substrates concomitantly with their translocation across the cell membrane. Involved in galactose transport with PtcB and Lmg_0963. This chain is PTS system galactose-specific EIIA component, found in Lactococcus lactis subsp. cremoris (strain MG1363).